A 283-amino-acid polypeptide reads, in one-letter code: Thymidylate synthase (283 aa).

A dUMP-binding site is contributed by Arg-22. Cys-160 acts as the Nucleophile in catalysis. Residues Arg-180 to Asp-183, Asn-191, and His-221 to Tyr-223 contribute to the dUMP site. Asp-183 is a binding site for (6R)-5,10-methylene-5,6,7,8-tetrahydrofolate. Ala-282 serves as a coordination point for (6R)-5,10-methylene-5,6,7,8-tetrahydrofolate.

Belongs to the thymidylate synthase family. Bacterial-type ThyA subfamily. Homodimer.

Its subcellular location is the cytoplasm. The enzyme catalyses dUMP + (6R)-5,10-methylene-5,6,7,8-tetrahydrofolate = 7,8-dihydrofolate + dTMP. Its pathway is pyrimidine metabolism; dTTP biosynthesis. Catalyzes the reductive methylation of 2'-deoxyuridine-5'-monophosphate (dUMP) to 2'-deoxythymidine-5'-monophosphate (dTMP) while utilizing 5,10-methylenetetrahydrofolate (mTHF) as the methyl donor and reductant in the reaction, yielding dihydrofolate (DHF) as a by-product. This enzymatic reaction provides an intracellular de novo source of dTMP, an essential precursor for DNA biosynthesis. The chain is Thymidylate synthase from Colwellia psychrerythraea (strain 34H / ATCC BAA-681) (Vibrio psychroerythus).